We begin with the raw amino-acid sequence, 500 residues long: Aspartyl/glutamyl-tRNA(Asn/Gln) amidotransferase subunit B (500 aa).

This sequence belongs to the GatB/GatE family. GatB subfamily. In terms of assembly, heterotrimer of A, B and C subunits.

It catalyses the reaction L-glutamyl-tRNA(Gln) + L-glutamine + ATP + H2O = L-glutaminyl-tRNA(Gln) + L-glutamate + ADP + phosphate + H(+). The enzyme catalyses L-aspartyl-tRNA(Asn) + L-glutamine + ATP + H2O = L-asparaginyl-tRNA(Asn) + L-glutamate + ADP + phosphate + 2 H(+). Allows the formation of correctly charged Asn-tRNA(Asn) or Gln-tRNA(Gln) through the transamidation of misacylated Asp-tRNA(Asn) or Glu-tRNA(Gln) in organisms which lack either or both of asparaginyl-tRNA or glutaminyl-tRNA synthetases. The reaction takes place in the presence of glutamine and ATP through an activated phospho-Asp-tRNA(Asn) or phospho-Glu-tRNA(Gln). The sequence is that of Aspartyl/glutamyl-tRNA(Asn/Gln) amidotransferase subunit B from Sinorhizobium fredii (strain NBRC 101917 / NGR234).